The sequence spans 186 residues: Tumor necrosis factor alpha-induced protein 8-like protein 1 (186 aa).

Belongs to the TNFAIP8 family. In terms of assembly, interacts with FBXW5; TNFAIP8L1 competes with TSC2 to bind FBXW5 increasing TSC2 stability by preventing its ubiquitination.

The protein resides in the cytoplasm. In terms of biological role, acts as a negative regulator of mTOR activity. This is Tumor necrosis factor alpha-induced protein 8-like protein 1 (TNFAIP8L1) from Bos taurus (Bovine).